Reading from the N-terminus, the 721-residue chain is Catalase-peroxidase 1 (721 aa).

A cross-link (tryptophyl-tyrosyl-methioninium (Trp-Tyr) (with M-252)) is located at residues 98-226 (WHAAGTYRIA…LAAVMMGLIY (129 aa)). Residue His-99 is the Proton acceptor of the active site. Positions 226 to 252 (YVNPEGVDGQPDPLKTAHDVRVTFARM) form a cross-link, tryptophyl-tyrosyl-methioninium (Tyr-Met) (with W-98). Heme b is bound at residue His-267.

It belongs to the peroxidase family. Peroxidase/catalase subfamily. As to quaternary structure, homodimer or homotetramer. Heme b serves as cofactor. In terms of processing, formation of the three residue Trp-Tyr-Met cross-link is important for the catalase, but not the peroxidase activity of the enzyme.

It catalyses the reaction H2O2 + AH2 = A + 2 H2O. The enzyme catalyses 2 H2O2 = O2 + 2 H2O. Its function is as follows. Bifunctional enzyme with both catalase and broad-spectrum peroxidase activity. This chain is Catalase-peroxidase 1, found in Vibrio parahaemolyticus serotype O3:K6 (strain RIMD 2210633).